We begin with the raw amino-acid sequence, 724 residues long: Ribosomal RNA large subunit methyltransferase K/L (724 aa).

The THUMP domain maps to 42-153 (DAQRLVLWSR…KGRATLSVDL (112 aa)).

The protein belongs to the methyltransferase superfamily. RlmKL family.

It is found in the cytoplasm. The enzyme catalyses guanosine(2445) in 23S rRNA + S-adenosyl-L-methionine = N(2)-methylguanosine(2445) in 23S rRNA + S-adenosyl-L-homocysteine + H(+). The catalysed reaction is guanosine(2069) in 23S rRNA + S-adenosyl-L-methionine = N(2)-methylguanosine(2069) in 23S rRNA + S-adenosyl-L-homocysteine + H(+). In terms of biological role, specifically methylates the guanine in position 2445 (m2G2445) and the guanine in position 2069 (m7G2069) of 23S rRNA. In Xylella fastidiosa (strain M12), this protein is Ribosomal RNA large subunit methyltransferase K/L.